The chain runs to 725 residues: Eukaryotic translation initiation factor 3 subunit B (725 aa).

In terms of domain architecture, RRM spans 46–130 (NCVFIAGIPV…HTFTARSFKD (85 aa)). WD repeat units follow at residues 202–240 (RANWTETVFTWSPHGSYLSTIHKQGIILWGGKDYARAHR), 242–280 (AHTNVQYIDFSPCETYLVTYAAPEESNSWGDCEKDSLRI), 354–395 (VNIE…SMQR), 462–504 (PLSE…HAPK), 510–552 (DAGV…AKRT), and 554–594 (VIEH…FTFQ).

It belongs to the eIF-3 subunit B family. As to quaternary structure, component of the eukaryotic translation initiation factor 3 (eIF-3) complex.

It localises to the cytoplasm. RNA-binding component of the eukaryotic translation initiation factor 3 (eIF-3) complex, which is involved in protein synthesis of a specialized repertoire of mRNAs and, together with other initiation factors, stimulates binding of mRNA and methionyl-tRNAi to the 40S ribosome. The eIF-3 complex specifically targets and initiates translation of a subset of mRNAs involved in cell proliferation. This chain is Eukaryotic translation initiation factor 3 subunit B, found in Caenorhabditis elegans.